The primary structure comprises 334 residues: MGSIGSMGKPIEGFLVAAIQFPVPIVNSRKDIDHNIESIIRTLHATKAGYPGVELIIFPEYSTQGLNTAKWLSEEFLLDVPGKETEAYAQACKEAKVYGVFSTMERNPDSNKNPYNTAIIINPQGEIILKYRKLFPWNPIEPWYPGDLGMPVCEGPGGSKLAVCICHDGMIPELAREAAYKGCNVYIRISGYSTQVNDQWILTNRSNAWHNLMYTVSVNLAGYDNVFYYFGEGQICNFDGTTLVQGHRNPWEIVTGEIYPKMADNARLSWGLENNIYNLGHRGYVAKPGGEHDAGLTYIKDLAAGKYKLPWEDHMKIKDGSIYGYPTTGGRFGK.

Residues F14–P260 form the CN hydrolase domain. The Proton acceptor role is filled by E60. K133 acts as the Proton donor in catalysis. C166 (nucleophile) is an active-site residue.

The protein belongs to the carbon-nitrogen hydrolase superfamily. Aliphatic amidase family.

The catalysed reaction is formamide + H2O = formate + NH4(+). Is an aliphatic amidase with a restricted substrate specificity, as it only hydrolyzes formamide. This is Formamidase from Helicobacter pylori (strain HPAG1).